Reading from the N-terminus, the 339-residue chain is DNA-directed RNA polymerase subunit alpha (339 aa).

The interval methionine 1 to glutamate 233 is alpha N-terminal domain (alpha-NTD). The alpha C-terminal domain (alpha-CTD) stretch occupies residues lysine 264–phenylalanine 339.

It belongs to the RNA polymerase alpha chain family. In terms of assembly, in plastids the minimal PEP RNA polymerase catalytic core is composed of four subunits: alpha, beta, beta', and beta''. When a (nuclear-encoded) sigma factor is associated with the core the holoenzyme is formed, which can initiate transcription.

The protein resides in the plastid. The protein localises to the chloroplast. The catalysed reaction is RNA(n) + a ribonucleoside 5'-triphosphate = RNA(n+1) + diphosphate. Functionally, DNA-dependent RNA polymerase catalyzes the transcription of DNA into RNA using the four ribonucleoside triphosphates as substrates. The sequence is that of DNA-directed RNA polymerase subunit alpha from Agropyron cristatum (Crested wheatgrass).